The following is a 548-amino-acid chain: Membrane protein insertase YidC (548 aa).

A helical membrane pass occupies residues 6–26; sequence NLLVIALLFVSFMIWQAWEQD. The tract at residues 28–56 is disordered; sequence NPQPQTQQTTQTTTTAAGSAADQGVPASG. Residues 29 to 42 are compositionally biased toward low complexity; that stretch reads PQPQTQQTTQTTTT. Transmembrane regions (helical) follow at residues 350–370, 424–444, 458–478, and 499–519; these read FVGNWGFSIIIITFIVRGIMY, FPLIIQMPIFLALYYMLMGSI, LSAQDPYYILPILMGVTMFFI, and PVIFTVFFLWFPSGLVLYYIV.

This sequence belongs to the OXA1/ALB3/YidC family. Type 1 subfamily. As to quaternary structure, interacts with the Sec translocase complex via SecD. Specifically interacts with transmembrane segments of nascent integral membrane proteins during membrane integration.

It localises to the cell inner membrane. Required for the insertion and/or proper folding and/or complex formation of integral membrane proteins into the membrane. Involved in integration of membrane proteins that insert both dependently and independently of the Sec translocase complex, as well as at least some lipoproteins. Aids folding of multispanning membrane proteins. The protein is Membrane protein insertase YidC of Salmonella newport (strain SL254).